The chain runs to 283 residues: 4-diphosphocytidyl-2-C-methyl-D-erythritol kinase (283 aa).

Lys10 is a catalytic residue. Pro99–Ser109 provides a ligand contact to ATP. Asp141 is a catalytic residue.

This sequence belongs to the GHMP kinase family. IspE subfamily. In terms of assembly, homodimer.

The enzyme catalyses 4-CDP-2-C-methyl-D-erythritol + ATP = 4-CDP-2-C-methyl-D-erythritol 2-phosphate + ADP + H(+). It functions in the pathway isoprenoid biosynthesis; isopentenyl diphosphate biosynthesis via DXP pathway; isopentenyl diphosphate from 1-deoxy-D-xylulose 5-phosphate: step 3/6. In terms of biological role, catalyzes the phosphorylation of the position 2 hydroxy group of 4-diphosphocytidyl-2C-methyl-D-erythritol. In Salmonella gallinarum (strain 287/91 / NCTC 13346), this protein is 4-diphosphocytidyl-2-C-methyl-D-erythritol kinase.